The following is a 139-amino-acid chain: ATP synthase epsilon chain (139 aa).

The protein belongs to the ATPase epsilon chain family. F-type ATPases have 2 components, CF(1) - the catalytic core - and CF(0) - the membrane proton channel. CF(1) has five subunits: alpha(3), beta(3), gamma(1), delta(1), epsilon(1). CF(0) has three main subunits: a, b and c.

The protein resides in the cell inner membrane. Its function is as follows. Produces ATP from ADP in the presence of a proton gradient across the membrane. The polypeptide is ATP synthase epsilon chain (Haemophilus ducreyi (strain 35000HP / ATCC 700724)).